Reading from the N-terminus, the 387-residue chain is Succinate--CoA ligase [ADP-forming] subunit beta (387 aa).

The 236-residue stretch at 9–244 (KAIFADNGIP…ITEENPAERE (236 aa)) folds into the ATP-grasp domain. ATP-binding positions include K46, 53 to 55 (GRG), E99, A102, and E107. Residues N199 and D213 each contribute to the Mg(2+) site. Substrate is bound by residues N264 and 321–323 (GIV).

This sequence belongs to the succinate/malate CoA ligase beta subunit family. In terms of assembly, heterotetramer of two alpha and two beta subunits. Requires Mg(2+) as cofactor.

The enzyme catalyses succinate + ATP + CoA = succinyl-CoA + ADP + phosphate. It carries out the reaction GTP + succinate + CoA = succinyl-CoA + GDP + phosphate. The protein operates within carbohydrate metabolism; tricarboxylic acid cycle; succinate from succinyl-CoA (ligase route): step 1/1. Succinyl-CoA synthetase functions in the citric acid cycle (TCA), coupling the hydrolysis of succinyl-CoA to the synthesis of either ATP or GTP and thus represents the only step of substrate-level phosphorylation in the TCA. The beta subunit provides nucleotide specificity of the enzyme and binds the substrate succinate, while the binding sites for coenzyme A and phosphate are found in the alpha subunit. The sequence is that of Succinate--CoA ligase [ADP-forming] subunit beta from Campylobacter jejuni subsp. jejuni serotype O:6 (strain 81116 / NCTC 11828).